A 138-amino-acid chain; its full sequence is Small ribosomal subunit protein uS11c (138 aa).

A disordered region spans residues 1–22 (MTKPIPRIGSRRNGRIGSRKNA). Residues 9–22 (GSRRNGRIGSRKNA) show a composition bias toward basic residues.

This sequence belongs to the universal ribosomal protein uS11 family. As to quaternary structure, part of the 30S ribosomal subunit.

Its subcellular location is the plastid. The protein resides in the chloroplast. The polypeptide is Small ribosomal subunit protein uS11c (Dioscorea elephantipes (Elephant's foot yam)).